The following is a 238-amino-acid chain: Phosphoribosylaminoimidazole-succinocarboxamide synthase (238 aa).

It belongs to the SAICAR synthetase family.

The catalysed reaction is 5-amino-1-(5-phospho-D-ribosyl)imidazole-4-carboxylate + L-aspartate + ATP = (2S)-2-[5-amino-1-(5-phospho-beta-D-ribosyl)imidazole-4-carboxamido]succinate + ADP + phosphate + 2 H(+). The protein operates within purine metabolism; IMP biosynthesis via de novo pathway; 5-amino-1-(5-phospho-D-ribosyl)imidazole-4-carboxamide from 5-amino-1-(5-phospho-D-ribosyl)imidazole-4-carboxylate: step 1/2. This is Phosphoribosylaminoimidazole-succinocarboxamide synthase from Desulfitobacterium hafniense (strain Y51).